The sequence spans 152 residues: UPF0756 membrane protein Daud_1310 (152 aa).

4 consecutive transmembrane segments (helical) span residues 14 to 34 (LVGV…LLFI), 51 to 71 (LELG…NGKI), 76 to 96 (IIYN…ALAT), and 112 to 132 (IIFG…GMPV).

Belongs to the UPF0756 family.

Its subcellular location is the cell membrane. This is UPF0756 membrane protein Daud_1310 from Desulforudis audaxviator (strain MP104C).